The chain runs to 186 residues: Der GTPase-activating protein YihI (186 aa).

The interval 1 to 65 (MARTKKTRRI…AGSRHSAVDT (65 aa)) is disordered. Composition is skewed to basic and acidic residues over residues 9–25 (RITDIMPMRKTDKRPEN) and 34–45 (TRYELDAKSREE).

It belongs to the YihI family. In terms of assembly, interacts with Der.

Its function is as follows. A GTPase-activating protein (GAP) that modifies Der/EngA GTPase function. May play a role in ribosome biogenesis. The polypeptide is Der GTPase-activating protein YihI (Histophilus somni (strain 129Pt) (Haemophilus somnus)).